We begin with the raw amino-acid sequence, 1041 residues long: DNA polymerase catalytic subunit (1041 aa).

The interval 1–23 (MAFFNPYFKSKNKGSDMPPKQSM) is disordered.

This sequence belongs to the DNA polymerase type-B family.

It localises to the host nucleus. The catalysed reaction is DNA(n) + a 2'-deoxyribonucleoside 5'-triphosphate = DNA(n+1) + diphosphate. It catalyses the reaction Endonucleolytic cleavage to 5'-phosphomonoester.. In terms of biological role, replicates viral genomic DNA. The replication complex is composed of six viral proteins: the DNA polymerase, processivity factor, primase, primase-associated factor, helicase, and ssDNA-binding protein. Additionally, the polymerase contains an intrinsic ribonuclease H (RNase H) activity that specifically degrades RNA/DNA heteroduplexes or duplex DNA substrates in the 5' to 3' direction. Therefore, it can catalyze the excision of the RNA primers that initiate the synthesis of Okazaki fragments at a replication fork during viral DNA replication. This is DNA polymerase catalytic subunit from Elephantid herpesvirus 1 (isolate Asian elephant/Berlin/Kiba/1998) (EIHV-1).